Consider the following 424-residue polypeptide: Glutamate-1-semialdehyde 2,1-aminomutase (424 aa).

Lys265 bears the N6-(pyridoxal phosphate)lysine mark.

Belongs to the class-III pyridoxal-phosphate-dependent aminotransferase family. HemL subfamily. Homodimer. It depends on pyridoxal 5'-phosphate as a cofactor.

The protein localises to the cytoplasm. It catalyses the reaction (S)-4-amino-5-oxopentanoate = 5-aminolevulinate. The protein operates within porphyrin-containing compound metabolism; protoporphyrin-IX biosynthesis; 5-aminolevulinate from L-glutamyl-tRNA(Glu): step 2/2. The protein is Glutamate-1-semialdehyde 2,1-aminomutase of Alkaliphilus oremlandii (strain OhILAs) (Clostridium oremlandii (strain OhILAs)).